A 137-amino-acid polypeptide reads, in one-letter code: Cell division protein SepF (137 aa).

This sequence belongs to the SepF family. As to quaternary structure, homodimer. Interacts with FtsZ.

The protein resides in the cytoplasm. Its function is as follows. Cell division protein that is part of the divisome complex and is recruited early to the Z-ring. Probably stimulates Z-ring formation, perhaps through the cross-linking of FtsZ protofilaments. Its function overlaps with FtsA. The sequence is that of Cell division protein SepF from Thermoanaerobacter pseudethanolicus (strain ATCC 33223 / 39E) (Clostridium thermohydrosulfuricum).